The primary structure comprises 332 residues: Adenosine deaminase (332 aa).

The Zn(2+) site is built by His12 and His14. Residues His14, Asp16, and Gly170 each contribute to the substrate site. Residue His197 coordinates Zn(2+). Residue Glu200 is the Proton donor of the active site. Asp278 lines the Zn(2+) pocket. Asp279 lines the substrate pocket.

This sequence belongs to the metallo-dependent hydrolases superfamily. Adenosine and AMP deaminases family. Adenosine deaminase subfamily. Requires Zn(2+) as cofactor.

It carries out the reaction adenosine + H2O + H(+) = inosine + NH4(+). The catalysed reaction is 2'-deoxyadenosine + H2O + H(+) = 2'-deoxyinosine + NH4(+). Functionally, catalyzes the hydrolytic deamination of adenosine and 2-deoxyadenosine. The protein is Adenosine deaminase of Yersinia enterocolitica serotype O:8 / biotype 1B (strain NCTC 13174 / 8081).